The sequence spans 241 residues: Probable transcriptional regulatory protein PSHAb0060 (241 aa).

This sequence belongs to the TACO1 family.

The protein resides in the cytoplasm. This chain is Probable transcriptional regulatory protein PSHAb0060, found in Pseudoalteromonas translucida (strain TAC 125).